The sequence spans 189 residues: Crossover junction endodeoxyribonuclease RuvC (189 aa).

Catalysis depends on residues aspartate 11, glutamate 71, and aspartate 143. 3 residues coordinate Mg(2+): aspartate 11, glutamate 71, and aspartate 143.

The protein belongs to the RuvC family. As to quaternary structure, homodimer which binds Holliday junction (HJ) DNA. The HJ becomes 2-fold symmetrical on binding to RuvC with unstacked arms; it has a different conformation from HJ DNA in complex with RuvA. In the full resolvosome a probable DNA-RuvA(4)-RuvB(12)-RuvC(2) complex forms which resolves the HJ. The cofactor is Mg(2+).

The protein localises to the cytoplasm. It carries out the reaction Endonucleolytic cleavage at a junction such as a reciprocal single-stranded crossover between two homologous DNA duplexes (Holliday junction).. Functionally, the RuvA-RuvB-RuvC complex processes Holliday junction (HJ) DNA during genetic recombination and DNA repair. Endonuclease that resolves HJ intermediates. Cleaves cruciform DNA by making single-stranded nicks across the HJ at symmetrical positions within the homologous arms, yielding a 5'-phosphate and a 3'-hydroxyl group; requires a central core of homology in the junction. The consensus cleavage sequence is 5'-(A/T)TT(C/G)-3'. Cleavage occurs on the 3'-side of the TT dinucleotide at the point of strand exchange. HJ branch migration catalyzed by RuvA-RuvB allows RuvC to scan DNA until it finds its consensus sequence, where it cleaves and resolves the cruciform DNA. The protein is Crossover junction endodeoxyribonuclease RuvC of Methylorubrum extorquens (strain CM4 / NCIMB 13688) (Methylobacterium extorquens).